Here is a 548-residue protein sequence, read N- to C-terminus: Chaperonin GroEL (548 aa).

Residues 30–33 (TLGP), Lys-51, 87–91 (DGTTT), Gly-415, 479–481 (NAA), and Asp-495 contribute to the ATP site.

It belongs to the chaperonin (HSP60) family. In terms of assembly, forms a cylinder of 14 subunits composed of two heptameric rings stacked back-to-back. Interacts with the co-chaperonin GroES.

The protein localises to the cytoplasm. It catalyses the reaction ATP + H2O + a folded polypeptide = ADP + phosphate + an unfolded polypeptide.. Its function is as follows. Together with its co-chaperonin GroES, plays an essential role in assisting protein folding. The GroEL-GroES system forms a nano-cage that allows encapsulation of the non-native substrate proteins and provides a physical environment optimized to promote and accelerate protein folding. The polypeptide is Chaperonin GroEL (Serratia proteamaculans (strain 568)).